The chain runs to 263 residues: Indolethylamine N-methyltransferase (263 aa).

Residue lysine 13 is modified to N6-succinyllysine. S-adenosyl-L-methionine-binding positions include tyrosine 20, tyrosine 25, glycine 63, tyrosine 69, 85–87 (DFT), and asparagine 90. The residue at position 96 (lysine 96) is an N6-succinyllysine. S-adenosyl-L-methionine-binding positions include 142-143 (DV) and leucine 163.

Belongs to the class I-like SAM-binding methyltransferase superfamily. NNMT/PNMT/TEMT family. As to quaternary structure, monomer. As to expression, widely expressed. The highest levels were in thyroid, adrenal gland, adult and fetal lung. Intermediate levels in heart, placenta, skeletal muscle, testis, small intestine, pancreas, stomach, spinal cord, lymph node and trachea. Very low levels in adult and fetal kidney and liver, in adult spleen, thymus, ovary, colon and bone marrow. Not expressed in peripheral blood leukocytes and brain.

It is found in the cytoplasm. It catalyses the reaction a tertiary amine + S-adenosyl-L-methionine = a methylated tertiary amine + S-adenosyl-L-homocysteine + H(+). The catalysed reaction is a secondary amine + S-adenosyl-L-methionine = a methylated secondary amine + S-adenosyl-L-homocysteine + H(+). The enzyme catalyses a primary amine + S-adenosyl-L-methionine = a methylated primary amine + S-adenosyl-L-homocysteine + H(+). It carries out the reaction dimethyl sulfide + S-adenosyl-L-methionine = trimethylsulfonium + S-adenosyl-L-homocysteine. In terms of biological role, functions as a thioether S-methyltransferase and is active with a variety of thioethers and the corresponding selenium and tellurium compounds, including 3-methylthiopropionaldehyde, dimethyl selenide, dimethyl telluride, 2-methylthioethylamine, 2-methylthioethanol, methyl-n-propyl sulfide and diethyl sulfide. Plays an important role in the detoxification of selenium compounds. Catalyzes the N-methylation of tryptamine and structurally related compounds. The chain is Indolethylamine N-methyltransferase (INMT) from Homo sapiens (Human).